The sequence spans 563 residues: AP-1-like transcription factor yap1 (563 aa).

The interval 23-179 is disordered; sequence LAALSSNQPP…AFRERKEKHL (157 aa). The short motif at 35–42 is the Bipartite nuclear localization signal element; that stretch reads QQNDKQRS. Residues 36–48 are compositionally biased toward basic and acidic residues; that stretch reads QNDKQRSQAKTDP. A compositionally biased stretch (low complexity) spans 52–67; sequence PGNMSSGSFSMSPGFN. A Bipartite nuclear localization signal motif is present at residues 68 to 75; it reads KTHPGSGG. Residues 79-94 are compositionally biased toward acidic residues; sequence GDDESPFLDFNPELDF. Composition is skewed to basic and acidic residues over residues 112–144 and 170–179; these read SEEH…DKAA and AFRERKEKHL. The bZIP domain maps to 154 to 217; it reads SEPTSKRKAQ…ERLQVELREY (64 aa). A basic motif region spans residues 159-180; sequence KRKAQNRAAQRAFRERKEKHLK. Residues 182-189 form a leucine-zipper region; sequence LETKVDEL. The transcription activation 1 stretch occupies residues 211–332; that stretch reads QVELREYRKR…PSPKVPSVYN (122 aa). 2 disordered regions span residues 267–380 and 394–420; these read IFNG…KLND and DAVR…TPGP. A n-CRD region spans residues 284–296; it reads SSPATSDSQVPGV. Polar residues predominate over residues 300 to 309; it reads ETLNGSNNRG. The span at 336 to 362 shows a compositional bias: low complexity; that stretch reads SASSHDSSNSCSPSSSSDSHQSQMLSS. Polar residues-rich tracts occupy residues 363–380 and 401–416; these read NGTS…KLND and ESVS…NYEQ. Positions 377–459 are transcription activation 2; it reads KLNDSVQNHH…SQDFGTFFDD (83 aa). Cystine bridges form between Cys-510–Cys-534, Cys-510–Cys-543, and Cys-534–Cys-543. The c-CRD stretch occupies residues 510–543; it reads CTKIWDRLQSMEKFRNGEIDVDNLCSELRTKARC. The Nuclear export signal signature appears at 528–535; the sequence is IDVDNLCS.

Belongs to the bZIP family. YAP subfamily. In terms of processing, depending on the oxidative stress inducing agent, yap1 can undergo two distinct conformational changes, both involving disulfide bond formation, and both masking the nuclear export signal, thus abolishing nuclear export.

It localises to the nucleus. The protein resides in the cytoplasm. In terms of biological role, transcription activator involved in oxidative stress response and redox homeostasis. Regulates the transcription of genes encoding antioxidant enzymes and components of the cellular thiol-reducing pathways. This Aspergillus oryzae (strain ATCC 42149 / RIB 40) (Yellow koji mold) protein is AP-1-like transcription factor yap1.